The primary structure comprises 351 residues: Heat-inducible transcription repressor HrcA (351 aa).

This sequence belongs to the HrcA family.

In terms of biological role, negative regulator of class I heat shock genes (grpE-dnaK-dnaJ and groELS operons). Prevents heat-shock induction of these operons. The polypeptide is Heat-inducible transcription repressor HrcA (Beutenbergia cavernae (strain ATCC BAA-8 / DSM 12333 / CCUG 43141 / JCM 11478 / NBRC 16432 / NCIMB 13614 / HKI 0122)).